We begin with the raw amino-acid sequence, 482 residues long: Catalase (482 aa).

Polar residues predominate over residues 1–11; that stretch reads MNAMTNKTLTT. Residues 1–21 are disordered; that stretch reads MNAMTNKTLTTAAGAPVADNN. Catalysis depends on residues His57 and Asn130. Tyr340 serves as a coordination point for heme.

Belongs to the catalase family. Homodimer. The cofactor is heme.

The catalysed reaction is 2 H2O2 = O2 + 2 H2O. Its function is as follows. Decomposes hydrogen peroxide into water and oxygen; serves to protect cells from the toxic effects of hydrogen peroxide. This chain is Catalase (katA), found in Bordetella bronchiseptica (strain ATCC BAA-588 / NCTC 13252 / RB50) (Alcaligenes bronchisepticus).